The chain runs to 499 residues: Na(+)/H(+) antiporter NhaB (499 aa).

The next 11 membrane-spanning stretches (helical) occupy residues 33–53 (PVIFLISPYIAGWVLILEFIF), 66–86 (PGGLLAIEAVLIGMVSPHTVY), 89–109 (VSGNLEVILLLVFMVAGIYFM), 128–148 (AILSLLFSLVAAVLSAFLDAL), 237–257 (FIEFFVRMAPISIPVLIAGLI), 305–325 (AIVALILVVALALHLAEVGLI), 326–346 (GLTVIILATAFCGVIEEHQIG), 349–369 (FEEALPFTSLLVVFFAVVGVI), 393–413 (MFFIANGVLSMISDNVFVATV), 449–469 (ATPNGQAAFLFLLTSAIAPLI), and 477–497 (VWMALPYTLVMGGLGYVMIVI).

The protein belongs to the NhaB Na(+)/H(+) (TC 2.A.34) antiporter family.

It is found in the cell inner membrane. The catalysed reaction is 2 Na(+)(in) + 3 H(+)(out) = 2 Na(+)(out) + 3 H(+)(in). In terms of biological role, na(+)/H(+) antiporter that extrudes sodium in exchange for external protons. The chain is Na(+)/H(+) antiporter NhaB from Hahella chejuensis (strain KCTC 2396).